The sequence spans 156 residues: ATP synthase subunit b (156 aa).

A helical transmembrane segment spans residues 7-27 (LIGELIAFTVFVLFCMKFVWP).

Belongs to the ATPase B chain family. As to quaternary structure, F-type ATPases have 2 components, F(1) - the catalytic core - and F(0) - the membrane proton channel. F(1) has five subunits: alpha(3), beta(3), gamma(1), delta(1), epsilon(1). F(0) has three main subunits: a(1), b(2) and c(10-14). The alpha and beta chains form an alternating ring which encloses part of the gamma chain. F(1) is attached to F(0) by a central stalk formed by the gamma and epsilon chains, while a peripheral stalk is formed by the delta and b chains.

It localises to the cell inner membrane. In terms of biological role, f(1)F(0) ATP synthase produces ATP from ADP in the presence of a proton or sodium gradient. F-type ATPases consist of two structural domains, F(1) containing the extramembraneous catalytic core and F(0) containing the membrane proton channel, linked together by a central stalk and a peripheral stalk. During catalysis, ATP synthesis in the catalytic domain of F(1) is coupled via a rotary mechanism of the central stalk subunits to proton translocation. Component of the F(0) channel, it forms part of the peripheral stalk, linking F(1) to F(0). This is ATP synthase subunit b from Pseudoalteromonas translucida (strain TAC 125).